Reading from the N-terminus, the 378-residue chain is Vacuolar membrane protein CAGL0J10076g (378 aa).

Positions 18-70 (RGLPRLVTTSTTPTPTTEPTTEPTTTKDETSQTSATDASTATTSTAATSTAAT) are disordered. 2 stretches are compositionally biased toward low complexity: residues 25 to 41 (TTST…TEPT) and 48 to 70 (SQTS…TAAT). Residues 118–138 (FIAVGSIAGAILMLIFLWWSI) traverse the membrane as a helical segment. Residues 299–368 (NDYDTPLIPD…ARDHRKTPSM (70 aa)) are disordered. Residues 321–337 (RSHRKTPSNDKYHRRNR) are compositionally biased toward basic residues. The span at 343–356 (SPSRSPTRTPIRTR) shows a compositional bias: low complexity.

It belongs to the PRM5 family.

The protein localises to the vacuole membrane. The chain is Vacuolar membrane protein CAGL0J10076g from Candida glabrata (strain ATCC 2001 / BCRC 20586 / JCM 3761 / NBRC 0622 / NRRL Y-65 / CBS 138) (Yeast).